The following is a 203-amino-acid chain: ATP-dependent Clp protease proteolytic subunit 2 (203 aa).

Catalysis depends on S101, which acts as the Nucleophile. The active site involves H126.

The protein belongs to the peptidase S14 family. In terms of assembly, fourteen ClpP subunits assemble into 2 heptameric rings which stack back to back to give a disk-like structure with a central cavity, resembling the structure of eukaryotic proteasomes.

It is found in the cytoplasm. The catalysed reaction is Hydrolysis of proteins to small peptides in the presence of ATP and magnesium. alpha-casein is the usual test substrate. In the absence of ATP, only oligopeptides shorter than five residues are hydrolyzed (such as succinyl-Leu-Tyr-|-NHMec, and Leu-Tyr-Leu-|-Tyr-Trp, in which cleavage of the -Tyr-|-Leu- and -Tyr-|-Trp bonds also occurs).. In terms of biological role, cleaves peptides in various proteins in a process that requires ATP hydrolysis. Has a chymotrypsin-like activity. Plays a major role in the degradation of misfolded proteins. The protein is ATP-dependent Clp protease proteolytic subunit 2 of Prochlorococcus marinus (strain MIT 9312).